The following is a 478-amino-acid chain: Ribulose bisphosphate carboxylase large chain (478 aa).

Residues methionine 1–serine 2 constitute a propeptide that is removed on maturation. Proline 3 is modified (N-acetylproline). Residue lysine 14 is modified to N6,N6,N6-trimethyllysine. Residues asparagine 123 and threonine 173 each contribute to the substrate site. Residue lysine 175 is the Proton acceptor of the active site. Lysine 177 contacts substrate. Lysine 201, aspartate 203, and glutamate 204 together coordinate Mg(2+). Lysine 201 carries the post-translational modification N6-carboxylysine. The active-site Proton acceptor is histidine 294. Positions 295, 327, and 379 each coordinate substrate.

This sequence belongs to the RuBisCO large chain family. Type I subfamily. As to quaternary structure, heterohexadecamer of 8 large chains and 8 small chains; disulfide-linked. The disulfide link is formed within the large subunit homodimers. It depends on Mg(2+) as a cofactor. The disulfide bond which can form in the large chain dimeric partners within the hexadecamer appears to be associated with oxidative stress and protein turnover.

It localises to the plastid. The protein resides in the chloroplast. It catalyses the reaction 2 (2R)-3-phosphoglycerate + 2 H(+) = D-ribulose 1,5-bisphosphate + CO2 + H2O. It carries out the reaction D-ribulose 1,5-bisphosphate + O2 = 2-phosphoglycolate + (2R)-3-phosphoglycerate + 2 H(+). Its function is as follows. RuBisCO catalyzes two reactions: the carboxylation of D-ribulose 1,5-bisphosphate, the primary event in carbon dioxide fixation, as well as the oxidative fragmentation of the pentose substrate in the photorespiration process. Both reactions occur simultaneously and in competition at the same active site. This is Ribulose bisphosphate carboxylase large chain from Neurachne munroi.